A 243-amino-acid polypeptide reads, in one-letter code: Zinc import ATP-binding protein ZnuC (243 aa).

Positions 8-225 (LNLSNVSYYI…SEFQKLFGHH (218 aa)) constitute an ABC transporter domain. Position 40-47 (40-47 (GPNGAGKS)) interacts with ATP.

The protein belongs to the ABC transporter superfamily. Zinc importer (TC 3.A.1.15.5) family. In terms of assembly, the complex is composed of two ATP-binding proteins (ZnuC), two transmembrane proteins (ZnuB) and a solute-binding protein (ZnuA).

The protein localises to the cell inner membrane. The enzyme catalyses Zn(2+)(out) + ATP(in) + H2O(in) = Zn(2+)(in) + ADP(in) + phosphate(in) + H(+)(in). In terms of biological role, part of the ABC transporter complex ZnuABC involved in zinc import. Responsible for energy coupling to the transport system. The chain is Zinc import ATP-binding protein ZnuC from Psychrobacter cryohalolentis (strain ATCC BAA-1226 / DSM 17306 / VKM B-2378 / K5).